The sequence spans 339 residues: Ribosomal RNA small subunit methyltransferase H (339 aa).

S-adenosyl-L-methionine-binding positions include 36–38, aspartate 55, phenylalanine 82, aspartate 103, and glutamine 110; that span reads GGY. The interval 286-319 is disordered; that stretch reads GPIGPSEAEATANPRARSAKLRAGERTDAPIPEP.

Belongs to the methyltransferase superfamily. RsmH family.

Its subcellular location is the cytoplasm. The enzyme catalyses cytidine(1402) in 16S rRNA + S-adenosyl-L-methionine = N(4)-methylcytidine(1402) in 16S rRNA + S-adenosyl-L-homocysteine + H(+). Functionally, specifically methylates the N4 position of cytidine in position 1402 (C1402) of 16S rRNA. This chain is Ribosomal RNA small subunit methyltransferase H, found in Methylobacterium nodulans (strain LMG 21967 / CNCM I-2342 / ORS 2060).